Consider the following 438-residue polypeptide: (3,5-dihydroxyphenyl)acetyl-CoA 1,2-dioxygenase (438 aa).

Substrate is bound by residues Asp183, Glu189, 222-225 (HPRY), 233-238 (AGINLK), Gly296, 325-327 (IPG), and Gln416.

This sequence belongs to the enoyl-CoA hydratase/isomerase family. In terms of assembly, homohexamer; dimer of trimers.

It carries out the reaction (3,5-dihydroxyphenyl)acetyl-CoA + O2 = 2-(3,5-dihydroxyphenyl)-2-oxoacetate + CoA + H(+). With respect to regulation, inhibited by DPA-S-(N-acetylcysteamine). Involved in the biosynthesis of the nonproteinogenic amino acid monomer (S)-3,5-dihydroxyphenylglycine (Dpg) responsible of the production of vancomycin and teicoplanin antibiotics. Catalyzes the unusual conversion 3,5-dihydroxyphenylacetyl-CoA (DPA-CoA) to 3,5-dihydroxyphenylglyoxylate. DpgC performed a net four-electron oxidation of the benzylic carbon of DPA-CoA and the hydrolysis of the thioester bond to generate free CoA. DpgC has the ability to process a diverse range of substituted phenylacetyl-CoA substrates. This Streptomyces toyocaensis protein is (3,5-dihydroxyphenyl)acetyl-CoA 1,2-dioxygenase.